The chain runs to 234 residues: Probable cyclic nucleotide phosphodiesterase Rmag_0669 (234 aa).

The Fe cation site is built by aspartate 11, histidine 13, aspartate 49, asparagine 79, histidine 145, histidine 184, and histidine 186. Residues histidine 13, aspartate 49, and 79 to 80 (NH) contribute to the AMP site. Histidine 186 serves as a coordination point for AMP.

It belongs to the cyclic nucleotide phosphodiesterase class-III family. It depends on Fe(2+) as a cofactor.

This Ruthia magnifica subsp. Calyptogena magnifica protein is Probable cyclic nucleotide phosphodiesterase Rmag_0669.